The chain runs to 169 residues: Protein-export protein SecB (169 aa).

It belongs to the SecB family. Homotetramer, a dimer of dimers. One homotetramer interacts with 1 SecA dimer.

It localises to the cytoplasm. Functionally, one of the proteins required for the normal export of preproteins out of the cell cytoplasm. It is a molecular chaperone that binds to a subset of precursor proteins, maintaining them in a translocation-competent state. It also specifically binds to its receptor SecA. The chain is Protein-export protein SecB from Alteromonas mediterranea (strain DSM 17117 / CIP 110805 / LMG 28347 / Deep ecotype).